The following is a 234-amino-acid chain: bZIP transcription factor 27 (234 aa).

Positions 152–159 (KKRGQDSD) match the Nuclear localization signal motif. Positions 163–213 (GDRRYKRMIKNRESAARSRARKQAYTNELELEIAHLQTENARLKIQQEQLK) constitute a bZIP domain. A basic motif region spans residues 165-184 (RRYKRMIKNRESAARSRARK). A leucine-zipper region spans residues 191 to 212 (LELEIAHLQTENARLKIQQEQL). The residue at position 231 (T231) is a Phosphothreonine.

Belongs to the bZIP family. As to quaternary structure, self-interacts. Interacts with FT and FD/BZIP14. Interacts with CPK33. Post-translationally, phosphorylated. In terms of tissue distribution, expressed on the flanks of the shoot apex.

It localises to the nucleus. In terms of biological role, transcription factor required for the transition to flowering promoted by FT. The chain is bZIP transcription factor 27 from Arabidopsis thaliana (Mouse-ear cress).